Here is a 240-residue protein sequence, read N- to C-terminus: 1-(5-phosphoribosyl)-5-[(5-phosphoribosylamino)methylideneamino] imidazole-4-carboxamide isomerase (240 aa).

The active-site Proton acceptor is the aspartate 8. Aspartate 129 serves as the catalytic Proton donor.

The protein belongs to the HisA/HisF family.

It localises to the cytoplasm. The enzyme catalyses 1-(5-phospho-beta-D-ribosyl)-5-[(5-phospho-beta-D-ribosylamino)methylideneamino]imidazole-4-carboxamide = 5-[(5-phospho-1-deoxy-D-ribulos-1-ylimino)methylamino]-1-(5-phospho-beta-D-ribosyl)imidazole-4-carboxamide. The protein operates within amino-acid biosynthesis; L-histidine biosynthesis; L-histidine from 5-phospho-alpha-D-ribose 1-diphosphate: step 4/9. The polypeptide is 1-(5-phosphoribosyl)-5-[(5-phosphoribosylamino)methylideneamino] imidazole-4-carboxamide isomerase (Listeria monocytogenes serotype 4a (strain HCC23)).